We begin with the raw amino-acid sequence, 602 residues long: Glutaminase liver isoform, mitochondrial (602 aa).

The transit peptide at 1-14 directs the protein to the mitochondrion; that stretch reads MRSMRALQNALSRA. Disordered stretches follow at residues 1-29 and 45-66; these read MRSM…PSRG and AQGR…ASHS. Serine 219 is a substrate binding site. Lysine 253 carries the N6-succinyllysine modification. Position 268 (asparagine 268) interacts with substrate. Lysine 279 and lysine 284 each carry N6-acetyllysine. Substrate is bound by residues glutamate 314 and asparagine 321. Lysine 329 carries the N6-acetyllysine modification. Substrate is bound by residues tyrosine 347, tyrosine 399, and valine 417. 2 ANK repeats span residues 518–551 and 552–585; these read DSRT…VKDR and WGNI…SETQ.

The protein belongs to the glutaminase family. As to quaternary structure, homotetramer, dimer of dimers. Does not assemble into higher oligomers. Interacts with the PDZ domain of the syntrophin SNTA1. Interacts with the PDZ domain of TAX1BP3.

Its subcellular location is the mitochondrion. The enzyme catalyses L-glutamine + H2O = L-glutamate + NH4(+). With respect to regulation, enzyme activity is not stimulated by phosphate. Phosphate increases kcat, but decreases substrate affinity, resulting in unchanged enzyme activity. Plays an important role in the regulation of glutamine catabolism. Promotes mitochondrial respiration and increases ATP generation in cells by catalyzing the synthesis of glutamate and alpha-ketoglutarate. Increases cellular anti-oxidant function via NADH and glutathione production. May play a role in preventing tumor proliferation. The polypeptide is Glutaminase liver isoform, mitochondrial (Gls2) (Mus musculus (Mouse)).